A 288-amino-acid chain; its full sequence is uncharacterized protein (288 aa).

A signal peptide spans 1 to 27 (MKFEFRTLVLISLAVVVVLSGCSQSPS). A disordered region spans residues 144-167 (GESGEAGGAGEQLPASDQASGEEP).

This is an uncharacterized protein from Archaeoglobus fulgidus (strain ATCC 49558 / DSM 4304 / JCM 9628 / NBRC 100126 / VC-16).